The primary structure comprises 315 residues: Serine/threonine-protein phosphatase PP2A catalytic subunit 2 (315 aa).

Residues D62, H64, D90, and N122 each contribute to the Mn(2+) site. Residue H123 is the Proton donor of the active site. Residues H172 and H247 each contribute to the Mn(2+) site. Residues 294–315 (QFEPAPRENEPHTTRRVPDYFL) are disordered. The segment covering 298-315 (APRENEPHTTRRVPDYFL) has biased composition (basic and acidic residues). L315 is modified (leucine methyl ester).

It belongs to the PPP phosphatase family. PP-2A subfamily. The cofactor is Mn(2+). Reversibly methyl esterified on Leu-315 by leucine carboxyl methyltransferase 1 (PPM1) and protein phosphatase methylesterase 1 (PPE1). Carboxyl methylation influences the affinity of the catalytic subunit for the different regulatory subunits, thereby modulating the PP2A holoenzyme's substrate specificity, enzyme activity and cellular localization.

It carries out the reaction O-phospho-L-seryl-[protein] + H2O = L-seryl-[protein] + phosphate. The enzyme catalyses O-phospho-L-threonyl-[protein] + H2O = L-threonyl-[protein] + phosphate. The protein is Serine/threonine-protein phosphatase PP2A catalytic subunit 2 (Ppn2) of Paramecium tetraurelia.